The sequence spans 312 residues: Malate dehydrogenase (312 aa).

NAD(+) is bound by residues 7 to 13 and D34; that span reads GAAGGIG. Substrate-binding residues include R81 and R87. NAD(+) is bound by residues N94 and 117–119; that span reads ITN. Positions 119 and 153 each coordinate substrate. H177 (proton acceptor) is an active-site residue. Residue M227 coordinates NAD(+).

It belongs to the LDH/MDH superfamily. MDH type 1 family. As to quaternary structure, homodimer.

The enzyme catalyses (S)-malate + NAD(+) = oxaloacetate + NADH + H(+). Catalyzes the reversible oxidation of malate to oxaloacetate. This Enterobacter sp. (strain 638) protein is Malate dehydrogenase.